The following is a 241-amino-acid chain: Chlorophyll a-b binding protein 6, chloroplastic (241 aa).

The transit peptide at 1 to 35 (MASNSLMSCGIAAVYPSLLSSSKSKFVSAGVPLPN) directs the protein to the chloroplast. Residue Trp48 coordinates chlorophyll b. The chlorophyll a site is built by Phe68, Glu87, and His90. Position 92 (Arg92) interacts with chlorophyll b. Residues 93 to 113 (WAMLAVPGILVPEALGYGNWV) form a helical membrane-spanning segment. Leu129 lines the chlorophyll a pocket. A helical transmembrane segment spans residues 132 to 152 (PVPWGTLPTILAIEFLAIAFV). 3 residues coordinate chlorophyll b: Val133, Glu153, and Arg156. The chlorophyll a site is built by Lys190, Glu191, Asn194, Arg196, Gln208, and His224. The chain crosses the membrane as a helical span at residues 197–217 (LALLAFVGFCVQQSAYPGTGP).

It belongs to the light-harvesting chlorophyll a/b-binding (LHC) protein family. In terms of assembly, the LHC complex consists of chlorophyll a-b binding proteins. Red-emitting heterodimer with LHCA4. Interacts with LHCA5. It depends on Binds at least 14 chlorophylls (8 Chl-a and 6 Chl-b) and carotenoids such as lutein and neoxanthin. as a cofactor. In terms of processing, photoregulated by reversible phosphorylation of its threonine residues.

It is found in the plastid. Its subcellular location is the chloroplast thylakoid membrane. Its function is as follows. The light-harvesting complex (LHC) functions as a light receptor, it captures and delivers excitation energy to photosystems with which it is closely associated. This Arabidopsis thaliana (Mouse-ear cress) protein is Chlorophyll a-b binding protein 6, chloroplastic.